We begin with the raw amino-acid sequence, 617 residues long: V-type proton ATPase catalytic subunit A (617 aa).

Threonine 136 is modified (phosphothreonine). 250–257 (GAFGCGKT) contributes to the ATP binding site. At serine 384 the chain carries Phosphoserine; by AMPK.

This sequence belongs to the ATPase alpha/beta chains family. V-ATPase is a heteromultimeric enzyme made up of two complexes: the ATP-hydrolytic V1 complex and the proton translocation V0 complex. The V1 complex consists of three catalytic AB heterodimers that form a heterohexamer, three peripheral stalks each consisting of EG heterodimers, one central rotor including subunits D and F, and the regulatory subunits C and H. The proton translocation complex V0 consists of the proton transport subunit a, a ring of proteolipid subunits c9c'', rotary subunit d, subunits e and f, and the accessory subunits ATP6AP1/Ac45 and ATP6AP2/PRR. Interacts with the V0 complex V-ATPase subunit a4 ATP6V0A4. Interacts with WFS1. Interacts with alpha-crystallin B chain/CRYAB and with MTOR, forming a ternary complex. In terms of processing, phosphorylation at Ser-384 by AMPK down-regulates its enzyme activity.

Its subcellular location is the cytoplasm. The protein localises to the cytosol. It is found in the cytoplasmic vesicle. It localises to the secretory vesicle. The protein resides in the clathrin-coated vesicle membrane. Its subcellular location is the lysosome. The catalysed reaction is ATP + H2O + 4 H(+)(in) = ADP + phosphate + 5 H(+)(out). ATP hydrolysis occurs at the interface between the nucleotide-binding domains of subunits A and B. ATP hydrolysis triggers a conformational change in the subunits D and F, which induces a shift of subunit d. The c-ring is subsequently rotated and results in a continuous proton translocation across the membrane. Its function is as follows. Catalytic subunit of the V1 complex of vacuolar(H+)-ATPase (V-ATPase), a multisubunit enzyme composed of a peripheral complex (V1) that hydrolyzes ATP and a membrane integral complex (V0) that translocates protons. V-ATPase is responsible for acidifying and maintaining the pH of intracellular compartments and in some cell types, is targeted to the plasma membrane, where it is responsible for acidifying the extracellular environment. In aerobic conditions, involved in intracellular iron homeostasis, thus triggering the activity of Fe(2+) prolyl hydroxylase (PHD) enzymes, and leading to HIF1A hydroxylation and subsequent proteasomal degradation. May play a role in neurite development and synaptic connectivity. In Pongo abelii (Sumatran orangutan), this protein is V-type proton ATPase catalytic subunit A (ATP6V1A).